The chain runs to 213 residues: Thiamine-phosphate synthase (213 aa).

Residues 38–42 (QLREK) and Asn73 each bind 4-amino-2-methyl-5-(diphosphooxymethyl)pyrimidine. The Mg(2+) site is built by Asp74 and Asp93. Ser111 provides a ligand contact to 4-amino-2-methyl-5-(diphosphooxymethyl)pyrimidine. 2-[(2R,5Z)-2-carboxy-4-methylthiazol-5(2H)-ylidene]ethyl phosphate is bound at residue 137–139 (TTS). 4-amino-2-methyl-5-(diphosphooxymethyl)pyrimidine is bound at residue Lys140. 2-[(2R,5Z)-2-carboxy-4-methylthiazol-5(2H)-ylidene]ethyl phosphate contacts are provided by residues Gly169 and 189–190 (IS).

This sequence belongs to the thiamine-phosphate synthase family. Requires Mg(2+) as cofactor.

The catalysed reaction is 2-[(2R,5Z)-2-carboxy-4-methylthiazol-5(2H)-ylidene]ethyl phosphate + 4-amino-2-methyl-5-(diphosphooxymethyl)pyrimidine + 2 H(+) = thiamine phosphate + CO2 + diphosphate. It carries out the reaction 2-(2-carboxy-4-methylthiazol-5-yl)ethyl phosphate + 4-amino-2-methyl-5-(diphosphooxymethyl)pyrimidine + 2 H(+) = thiamine phosphate + CO2 + diphosphate. It catalyses the reaction 4-methyl-5-(2-phosphooxyethyl)-thiazole + 4-amino-2-methyl-5-(diphosphooxymethyl)pyrimidine + H(+) = thiamine phosphate + diphosphate. It functions in the pathway cofactor biosynthesis; thiamine diphosphate biosynthesis; thiamine phosphate from 4-amino-2-methyl-5-diphosphomethylpyrimidine and 4-methyl-5-(2-phosphoethyl)-thiazole: step 1/1. Functionally, condenses 4-methyl-5-(beta-hydroxyethyl)thiazole monophosphate (THZ-P) and 2-methyl-4-amino-5-hydroxymethyl pyrimidine pyrophosphate (HMP-PP) to form thiamine monophosphate (TMP). The sequence is that of Thiamine-phosphate synthase from Lysinibacillus sphaericus (strain C3-41).